An 863-amino-acid polypeptide reads, in one-letter code: Chloride channel protein A (863 aa).

Over 1–124 (MFRNNNNDNN…TSKLNHMLKT (124 aa)) the chain is Cytoplasmic. The segment at 48–78 (ENGLINNNNNSHNNNNGGNNNNHGPSKVTHR) is disordered. The span at 49 to 71 (NGLINNNNNSHNNNNGGNNNNHG) shows a compositional bias: low complexity. The next 7 helical transmembrane spans lie at 125–145 (FGKW…AYLV), 171–191 (IAFL…SLVI), 228–248 (LVSL…GPMI), 289–309 (GAAA…LFGF), 324–344 (TFFA…GFDM), 367–387 (LIPF…FVNL), and 408–428 (VLEV…CAAF). Residues 434–460 (KTQANGSQTNSLDTSSSSILSSSGDNS) are disordered. The span at 439–460 (GSQTNSLDTSSSSILSSSGDNS) shows a compositional bias: low complexity. Helical transmembrane passes span 518–538 (IFTI…TTIT), 539–559 (SGLM…ATFG), and 561–581 (LVGQ…ALVG). CBS domains follow at residues 661-742 (MKTE…CHEQ) and 816-863 (MNLS…KDLL).

This sequence belongs to the chloride channel (TC 2.A.49) family.

It localises to the membrane. Functionally, voltage-gated chloride channel. Chloride channels may have several functions including the regulation of cell volume, membrane potential stabilization and signal transduction. This Dictyostelium discoideum (Social amoeba) protein is Chloride channel protein A (clcA).